The following is a 201-amino-acid chain: Large ribosomal subunit protein uL18 (201 aa).

Belongs to the universal ribosomal protein uL18 family. Part of the 50S ribosomal subunit. Contacts the 5S and 23S rRNAs.

Its function is as follows. This is one of the proteins that bind and probably mediate the attachment of the 5S RNA into the large ribosomal subunit, where it forms part of the central protuberance. The polypeptide is Large ribosomal subunit protein uL18 (Thermococcus gammatolerans (strain DSM 15229 / JCM 11827 / EJ3)).